The chain runs to 386 residues: Inactive GDSL esterase/lipase-like protein 23 (386 aa).

The N-terminal stretch at 1 to 29 (MMAKNCNLVSVLCVFLVLTLFNKPITVAG) is a signal peptide. S43 serves as the catalytic Nucleophile. 3 N-linked (GlcNAc...) asparagine glycosylation sites follow: N105, N165, and N288. Residues D322 and H325 contribute to the active site.

This sequence belongs to the 'GDSL' lipolytic enzyme family. As to quaternary structure, part of the PYK10 complex. Interacts with MVP1. As to expression, expressed mainly in roots.

It is found in the endoplasmic reticulum. In terms of biological role, involved in the control of the PYK10 complex size and possibly substrate specificity. May be exported from the endoplasmic reticulum upon interaction with MVP1. This is Inactive GDSL esterase/lipase-like protein 23 (GLL23) from Arabidopsis thaliana (Mouse-ear cress).